Here is a 636-residue protein sequence, read N- to C-terminus: Chitin synthase VI (636 aa).

The next 4 helical transmembrane spans lie at 23–43 (LQWF…LFCI), 374–394 (TIRT…TTTA), 399–419 (LPVG…LYFG), and 427–447 (IWFY…YMVY). The interval 595–636 (QRLRLEQRPRTGPSLNARWQNGPQASETSQGRSQVDDVGIAF) is disordered. Residues 607 to 627 (PSLNARWQNGPQASETSQGRS) show a composition bias toward polar residues.

Belongs to the chitin synthase family. Class VI subfamily. Moderately expressed during appressorium formation.

Its subcellular location is the cell membrane. The enzyme catalyses [(1-&gt;4)-N-acetyl-beta-D-glucosaminyl](n) + UDP-N-acetyl-alpha-D-glucosamine = [(1-&gt;4)-N-acetyl-beta-D-glucosaminyl](n+1) + UDP + H(+). Polymerizes chitin, a structural polymer of the cell wall and septum, by transferring the sugar moiety of UDP-GlcNAc to the non-reducing end of the growing chitin polymer. Contributes to the production of conidia but is the only chitine synthase that does not contribute to the ability of fungal conidia to germinate. Involved in fungal stress tolerances. The protein is Chitin synthase VI of Metarhizium acridum (strain CQMa 102).